A 361-amino-acid chain; its full sequence is tRNA-specific 2-thiouridylase MnmA (361 aa).

ATP is bound by residues 6–13 (LVSGGVDS) and I32. The segment at 93 to 95 (NPD) is interaction with target base in tRNA. C98 (nucleophile) is an active-site residue. An intrachain disulfide couples C98 to C193. G121 provides a ligand contact to ATP. Residues 143–145 (KDQ) are interaction with tRNA. The active-site Cysteine persulfide intermediate is C193.

It belongs to the MnmA/TRMU family.

Its subcellular location is the cytoplasm. It catalyses the reaction S-sulfanyl-L-cysteinyl-[protein] + uridine(34) in tRNA + AH2 + ATP = 2-thiouridine(34) in tRNA + L-cysteinyl-[protein] + A + AMP + diphosphate + H(+). In terms of biological role, catalyzes the 2-thiolation of uridine at the wobble position (U34) of tRNA, leading to the formation of s(2)U34. This chain is tRNA-specific 2-thiouridylase MnmA, found in Porphyromonas gingivalis (strain ATCC 33277 / DSM 20709 / CIP 103683 / JCM 12257 / NCTC 11834 / 2561).